Consider the following 183-residue polypeptide: Tetrahydromethanopterin S-methyltransferase subunit A 2 (183 aa).

Over 1 to 101 the chain is Cytoplasmic; it reads MFLMVEKKPV…TMKALHSNGV (101 aa). His87 is a binding site for 5-hydroxybenzimidazolylcob(I)amide. Residues 102 to 118 form a helical membrane-spanning segment; sequence DLETGRIIGATGAIPYI. Over 119-183 the chain is Extracellular; sequence ENMPEEAIER…IGKGDSEENT (65 aa).

This sequence belongs to the MtrA family. As to quaternary structure, the complex is composed of 8 subunits; MtrA, MtrB, MtrC, MtrD, MtrE, MtrF, MtrG and MtrH. 5-hydroxybenzimidazolylcob(I)amide is required as a cofactor.

The protein resides in the cell membrane. It carries out the reaction 5-methyl-5,6,7,8-tetrahydromethanopterin + coenzyme M + 2 Na(+)(in) = 5,6,7,8-tetrahydromethanopterin + methyl-coenzyme M + 2 Na(+)(out). Its pathway is one-carbon metabolism; methanogenesis from CO(2); methyl-coenzyme M from 5,10-methylene-5,6,7,8-tetrahydromethanopterin: step 2/2. Its function is as follows. Part of a complex that catalyzes the formation of methyl-coenzyme M and tetrahydromethanopterin from coenzyme M and methyl-tetrahydromethanopterin. This is an energy-conserving, sodium-ion translocating step. This is Tetrahydromethanopterin S-methyltransferase subunit A 2 from Methanothermobacter thermautotrophicus (strain ATCC 29096 / DSM 1053 / JCM 10044 / NBRC 100330 / Delta H) (Methanobacterium thermoautotrophicum).